A 435-amino-acid chain; its full sequence is Bystin (435 aa).

The tract at residues 1-102 (MPKFKAARGA…VPQDGSDDEE (102 aa)) is disordered. An Omega-N-methylarginine modification is found at arginine 40. A compositionally biased stretch (basic and acidic residues) spans 71-87 (AEHGSGDRPAVPRERTT). A Phosphoserine modification is found at serine 98. A Phosphothreonine modification is found at threonine 154. A phosphoserine mark is found at serine 165 and serine 412.

This sequence belongs to the bystin family. In terms of assembly, binds trophinin, tastin and cytokeratins.

Its subcellular location is the cytoplasm. The protein localises to the nucleus. It localises to the nucleolus. Its function is as follows. Required for processing of 20S pre-rRNA precursor and biogenesis of 40S ribosomal subunits. This chain is Bystin (BYSL), found in Bos taurus (Bovine).